The sequence spans 117 residues: Ribosome-binding factor A (117 aa).

Belongs to the RbfA family. As to quaternary structure, monomer. Binds 30S ribosomal subunits, but not 50S ribosomal subunits or 70S ribosomes.

The protein resides in the cytoplasm. Functionally, one of several proteins that assist in the late maturation steps of the functional core of the 30S ribosomal subunit. Associates with free 30S ribosomal subunits (but not with 30S subunits that are part of 70S ribosomes or polysomes). Required for efficient processing of 16S rRNA. May interact with the 5'-terminal helix region of 16S rRNA. In Lacticaseibacillus casei (strain BL23) (Lactobacillus casei), this protein is Ribosome-binding factor A.